The chain runs to 460 residues: MSVAQNTFPLSELMISLTTALDMTEGQPPEHCIRCCWIGMHIGMQLELSEPELHDLFFTLLLKDAGCSSNAARICELYATDDLTFKRRYKTVGTSLSSVINFIVKNTGSEQSWTERILTTIDILKNGNDYAQELIQTRCTRGADVARELRFSEAVAQGIHSLDEHWNGQGRPEQRKGEAIPLFSRIALLAQVFDVFQMEHSIEEALQEIMARSGVWFDPKLVEVVEQLVENPRFLSGLKATDISQRVMNLPPAQAHLPLDDAYLECIVTAFGKIVDAKSPYTAGHSERVAVYTDLIARQLAISDADRIWLRRAALLHDIGKLGVSNAILDKPGKLDEAEWRAVQAHAAYTEQILYKLSPFKTLARMAGAHHEKLDGTGYPRGVNGDEISLMTRIITTADIFDALSAERPYRAAMPIDKALAIMEENLHTAIDPECFAALKKALNLLPDEYTQLPHSSDKT.

In terms of domain architecture, HD spans 28–189 (PPEHCIRCCW…IPLFSRIALL (162 aa)). Residues 260–455 (DDAYLECIVT…LPDEYTQLPH (196 aa)) form the HD-GYP domain. Residues H317 and D318 each coordinate a divalent metal cation. K321 (proton donor) is an active-site residue. A divalent metal cation-binding residues include H346, H370, H371, and D399.

As to quaternary structure, monomer. The cofactor is Mn(2+).

It catalyses the reaction 3',3'-cGAMP + H2O = 5'-pApG-3' + H(+). Its function is as follows. Phosphodiesterase (PDE) that catalyzes the hydrolysis of 3'3'-cyclic GMP-AMP (3'3'-cGAMP), leading to linear 5'-pApG. Counteracts the function of the 3'3'-cGAMP synthase DncV, and is involved in the modulation of intracellular 3'3'-cGAMP levels. Enhances bacterial chemotaxis and inhibits intestinal colonization in vivo. Thus exerts a crucial role in regulating bacterial infectivity through catalyzing 3'3'-cGAMP degradation. Is specific for 3'3'-cGAMP since it cannot degrade other cGAMP linkage isomers (3'2'-, 2'3'-, and 2'2'-cGAMPs); is also able to hydrolyze c-di-GMP but not c-di-AMP. In Vibrio cholerae serotype O1 (strain ATCC 39315 / El Tor Inaba N16961), this protein is 3'3'-cGAMP-specific phosphodiesterase 3.